We begin with the raw amino-acid sequence, 118 residues long: Protein TusC (118 aa).

It belongs to the DsrF/TusC family. As to quaternary structure, heterohexamer, formed by a dimer of trimers. The hexameric TusBCD complex contains 2 copies each of TusB, TusC and TusD. The TusBCD complex interacts with TusE.

Its subcellular location is the cytoplasm. Part of a sulfur-relay system required for 2-thiolation of 5-methylaminomethyl-2-thiouridine (mnm(5)s(2)U) at tRNA wobble positions. The sequence is that of Protein TusC from Salmonella agona (strain SL483).